The sequence spans 354 residues: Src kinase-associated phosphoprotein 1 (354 aa).

One can recognise a PH domain in the interval 107–210 (NVIKQGYLEK…WVDQISFLLK (104 aa)). A phosphotyrosine mark is found at Tyr142 and Tyr236. Phosphotyrosine; by FYN is present on residues Tyr267 and Tyr290. The interaction with FYB1 stretch occupies residues 285 to 290 (RRRVDY). Residues 289-350 (DYADYYQGLW…PKDYLTTAFE (62 aa)) form the SH3 domain.

Belongs to the SKAP family. Homodimer. Interacts with FYN. Interacts with PTPRC. Interacts with GRB2 when phosphorylated on Tyr-267. Interacts with FYB1, which is required for SKAP2 protein stability. Part of a complex consisting of SKAP1, FYB1 and CLNK. Interacts with RASGRP1. Interacts with FYB2. Phosphorylated on tyrosines. Phosphorylation by FYN on Tyr-267 is required for GRB2 interaction. Phosphorylation by FYN on Tyr-290 abolishes interaction with FYB1. Tyr-236 is dephosphorylated by PTPRC. As to expression, expressed in mast cells (at protein level).

It localises to the cytoplasm. Its subcellular location is the nucleus. It is found in the cell membrane. Functionally, positively regulates T-cell receptor signaling by enhancing the MAP kinase pathway. Required for optimal conjugation between T-cells and antigen-presenting cells by promoting the clustering of integrin ITGAL on the surface of T-cells. May be involved in high affinity immunoglobulin epsilon receptor signaling in mast cells. This Rattus norvegicus (Rat) protein is Src kinase-associated phosphoprotein 1 (Skap1).